A 103-amino-acid chain; its full sequence is Non-histone chromosomal protein HMG-14B (103 aa).

Positions 1-103 (MPKRKVAASR…AVEKEEVKSE (103 aa)) are disordered. Positions 29-50 (VPDKAEPKAKALAAKDKSENKK) are enriched in basic and acidic residues. Positions 51-60 (AQSKGKKGPK) are enriched in basic residues. The span at 94–103 (AVEKEEVKSE) shows a compositional bias: basic and acidic residues.

Belongs to the HMGN family.

Its subcellular location is the nucleus. In terms of biological role, binds to the inner side of the nucleosomal DNA thus altering the interaction between the DNA and the histone octamer. May be involved in the process which maintains transcribable genes in a unique chromatin conformation. This is Non-histone chromosomal protein HMG-14B (HMG14) from Gallus gallus (Chicken).